Consider the following 241-residue polypeptide: Lactate utilization protein C (241 aa).

Belongs to the LutC/YkgG family.

Functionally, is involved in L-lactate degradation and allows cells to grow with lactate as the sole carbon source. This chain is Lactate utilization protein C, found in Bacillus velezensis (strain DSM 23117 / BGSC 10A6 / LMG 26770 / FZB42) (Bacillus amyloliquefaciens subsp. plantarum).